The sequence spans 562 residues: Ycf55-like protein (562 aa).

The Response regulatory domain occupies 7–125 (TIVIVDEDPV…DLVTGLKQVH (119 aa)).

Belongs to the ycf55 family.

The protein is Ycf55-like protein of Synechocystis sp. (strain ATCC 27184 / PCC 6803 / Kazusa).